Here is a 309-residue protein sequence, read N- to C-terminus: HPr kinase/phosphorylase (309 aa).

Active-site residues include His138 and Lys159. 153 to 160 serves as a coordination point for ATP; sequence GQSGVGKS. Mg(2+) is bound at residue Ser160. The active-site Proton acceptor; for phosphorylation activity. Proton donor; for dephosphorylation activity is Asp177. The interval 201-210 is important for the catalytic mechanism of both phosphorylation and dephosphorylation; sequence LEIRGLGIIN. Glu202 contacts Mg(2+). Arg243 is an active-site residue. The tract at residues 264-269 is important for the catalytic mechanism of dephosphorylation; sequence PVRPGR.

This sequence belongs to the HPrK/P family. Homohexamer. It depends on Mg(2+) as a cofactor.

The catalysed reaction is [HPr protein]-L-serine + ATP = [HPr protein]-O-phospho-L-serine + ADP + H(+). The enzyme catalyses [HPr protein]-O-phospho-L-serine + phosphate + H(+) = [HPr protein]-L-serine + diphosphate. In terms of biological role, catalyzes the ATP- as well as the pyrophosphate-dependent phosphorylation of a specific serine residue in HPr, a phosphocarrier protein of the phosphoenolpyruvate-dependent sugar phosphotransferase system (PTS). HprK/P also catalyzes the pyrophosphate-producing, inorganic phosphate-dependent dephosphorylation (phosphorolysis) of seryl-phosphorylated HPr (P-Ser-HPr). The two antagonistic activities of HprK/P are regulated by several intracellular metabolites, which change their concentration in response to the absence or presence of rapidly metabolisable carbon sources (glucose, fructose, etc.) in the growth medium. Also phosphorylates/dephosphorylates the HPr-like catabolite repression protein crh on a specific serine residue. Therefore, by controlling the phosphorylation state of HPr and crh, HPrK/P is a sensor enzyme that plays a major role in the regulation of carbon metabolism and sugar transport: it mediates carbon catabolite repression (CCR), and regulates PTS-catalyzed carbohydrate uptake and inducer exclusion. The chain is HPr kinase/phosphorylase from Bacillus cereus (strain B4264).